The chain runs to 936 residues: Bifunctional uridylyltransferase/uridylyl-removing enzyme (936 aa).

The tract at residues 1 to 372 is uridylyltransferase; it reads MTIPRIRQPR…SIATLLMRKR (372 aa). Residues 373–727 form a uridylyl-removing region; it reads NLGDFVLDGG…VLPDPERAVS (355 aa). Residues 488–610 form the HD domain; sequence TDEHTIRAIG…VQSVERLHLL (123 aa). ACT domains follow at residues 728–809 and 840–915; these read EVLV…KALR and VIEI…TVPR. Residues 915–930 are compositionally biased toward basic and acidic residues; that stretch reads RKVEEGAEQGAEKADA. The segment at 915 to 936 is disordered; that stretch reads RKVEEGAEQGAEKADAGEIVAA.

Belongs to the GlnD family. Mg(2+) is required as a cofactor.

The catalysed reaction is [protein-PII]-L-tyrosine + UTP = [protein-PII]-uridylyl-L-tyrosine + diphosphate. It carries out the reaction [protein-PII]-uridylyl-L-tyrosine + H2O = [protein-PII]-L-tyrosine + UMP + H(+). Its activity is regulated as follows. Uridylyltransferase (UTase) activity is inhibited by glutamine, while glutamine activates uridylyl-removing (UR) activity. In terms of biological role, modifies, by uridylylation and deuridylylation, the PII regulatory proteins (GlnB and homologs), in response to the nitrogen status of the cell that GlnD senses through the glutamine level. Under low glutamine levels, catalyzes the conversion of the PII proteins and UTP to PII-UMP and PPi, while under higher glutamine levels, GlnD hydrolyzes PII-UMP to PII and UMP (deuridylylation). Thus, controls uridylylation state and activity of the PII proteins, and plays an important role in the regulation of nitrogen fixation and metabolism. This Rhodospirillum rubrum (strain ATCC 11170 / ATH 1.1.1 / DSM 467 / LMG 4362 / NCIMB 8255 / S1) protein is Bifunctional uridylyltransferase/uridylyl-removing enzyme.